Here is a 277-residue protein sequence, read N- to C-terminus: Large ribosomal subunit protein uL2 (277 aa).

The interval 223–264 (VAMNPVDHPHGGGEGKTAAGRHPVSPWGTPSKGSRTRRNKRT) is disordered.

The protein belongs to the universal ribosomal protein uL2 family. As to quaternary structure, part of the 50S ribosomal subunit. Forms a bridge to the 30S subunit in the 70S ribosome.

One of the primary rRNA binding proteins. Required for association of the 30S and 50S subunits to form the 70S ribosome, for tRNA binding and peptide bond formation. It has been suggested to have peptidyltransferase activity; this is somewhat controversial. Makes several contacts with the 16S rRNA in the 70S ribosome. The chain is Large ribosomal subunit protein uL2 from Nitrosomonas eutropha (strain DSM 101675 / C91 / Nm57).